The chain runs to 295 residues: GTPase Era (295 aa).

One can recognise an Era-type G domain in the interval 5–172; that stretch reads YCGYAAIIGR…EQAVHQLMPE (168 aa). Residues 13-20 form a G1 region; that stretch reads GRPNVGKS. Position 13–20 (13–20) interacts with GTP; it reads GRPNVGKS. The segment at 39–43 is G2; the sequence is QTTRY. Residues 60-63 form a G3 region; that stretch reads DTPG. Residues 60–64 and 121–124 each bind GTP; these read DTPGL and NKVD. The interval 121–124 is G4; sequence NKVD. A G5 region spans residues 151 to 153; sequence LSA. A KH type-2 domain is found at 203 to 279; sequence LGQEIPYSLA…FLQLWVKVKS (77 aa).

Belongs to the TRAFAC class TrmE-Era-EngA-EngB-Septin-like GTPase superfamily. Era GTPase family. Monomer.

The protein localises to the cytoplasm. Its subcellular location is the cell inner membrane. An essential GTPase that binds both GDP and GTP, with rapid nucleotide exchange. Plays a role in 16S rRNA processing and 30S ribosomal subunit biogenesis and possibly also in cell cycle regulation and energy metabolism. In Coxiella burnetii (strain CbuG_Q212) (Coxiella burnetii (strain Q212)), this protein is GTPase Era.